The following is a 480-amino-acid chain: Acyl-lipid (8-3)-desaturase (480 aa).

Positions 1–30 (MAPHSADTAGLVPSDELRLRTSNSKGPEQE) are disordered. The Cytochrome b5 heme-binding domain maps to 33–107 (LKKYTLEDVS…LAKYCIGELV (75 aa)). Residues His-68 and His-90 each contribute to the heme site. 2 helical membrane-spanning segments follow: residues 151–171 (IHPH…ASYY) and 173–193 (AFFW…MGFF). The Histidine box-1 signature appears at 203 to 207 (HDGNH). Residues 238-243 (HVVGHH) carry the Histidine box-2 motif. The next 3 helical transmembrane spans lie at 280 to 300 (IYLA…DDFL), 322 to 342 (IFFQ…SVYG), and 348 to 368 (TFLA…AFLF). The short motif at 419 to 423 (QIEHH) is the Histidine box-3 element.

The protein belongs to the fatty acid desaturase type 1 family. The cofactor is Fe(2+).

The protein localises to the membrane. The catalysed reaction is an (8Z,11Z,14Z)-icosatrienoyl-containing glycerolipid + 2 Fe(II)-[cytochrome b5] + O2 + 2 H(+) = (5Z,8Z,11Z,14Z)-eicosatetraenoyl-containing glycerolipid + 2 Fe(III)-[cytochrome b5] + 2 H2O. The enzyme catalyses an (8Z,11Z,14Z,17Z)-eicosatetraenoyl-containing glycerolipid + 2 Fe(II)-[cytochrome b5] + O2 + 2 H(+) = a (5Z,8Z,11Z,14Z,17Z)-eicosapentaenoyl-containing glycerolipid + 2 Fe(III)-[cytochrome b5] + 2 H2O. Functionally, fatty acid desaturase that introduces a cis double bond at the 5-position in 20-carbon polyunsaturated fatty acids incorporated in a glycerolipid that contain a Delta(8) double bond. This chain is Acyl-lipid (8-3)-desaturase, found in Physcomitrium patens (Spreading-leaved earth moss).